A 202-amino-acid polypeptide reads, in one-letter code: Dephospho-CoA kinase (202 aa).

The DPCK domain occupies Lys-6 to Leu-202. Residue Ser-14 to Glu-19 coordinates ATP.

This sequence belongs to the CoaE family.

It localises to the cytoplasm. It catalyses the reaction 3'-dephospho-CoA + ATP = ADP + CoA + H(+). The protein operates within cofactor biosynthesis; coenzyme A biosynthesis; CoA from (R)-pantothenate: step 5/5. Catalyzes the phosphorylation of the 3'-hydroxyl group of dephosphocoenzyme A to form coenzyme A. The protein is Dephospho-CoA kinase of Chlamydia felis (strain Fe/C-56) (Chlamydophila felis).